Consider the following 228-residue polypeptide: MLSSNPMTWKLSHMVVPGKNSTISPDYFTASQTSPLDMMKFPSPGSSKRYDNGGGIGLGIVAALEKSSIGINPVCHTGAGSKGFDLARYSKRFQFAAGIDLSDSEEYTCVTTRDGLTKVYYKEEEFEFGHNLLNGDQRWRKPIEIAEESPAKERRVLRDCPDFLTSCCLCKKKLQGKDIYMYKGDEGFCSKECRSLKIMEDSLKEQHKLTSVEVLTGEEIASPGIFLI.

The segment at 162–205 (DFLTSCCLCKKKLQGKDIYMYKGDEGFCSKECRSLKIMEDSLKE) adopts an FLZ-type zinc-finger fold.

This sequence belongs to the FLZ family. In terms of assembly, interacts with KIN10 and KIN11 via its FLZ-type zinc finger domain. Interacts with KINB1 and KINB2 via its N-terminal part. Forms homodimer and heterodimer with FLZ2 and FLZ10 in vitro.

Functionally, may act as an adapter to facilitate the interaction of SnRK1 complex with effector proteins, conferring tissue- and stimulus-type specific differences in the SnRK1 regulation pathway. In Arabidopsis thaliana (Mouse-ear cress), this protein is FCS-Like Zinc finger 12.